Reading from the N-terminus, the 346-residue chain is Annexin A1 (346 aa).

N-acetylalanine is present on A2. S5 bears the Phosphoserine; by TRPM7 mark. Residue Q19 forms an Isoglutamyl lysine isopeptide (Gln-Lys) (interchain with K-?) linkage. Phosphotyrosine; by EGFR is present on Y21. Position 27 is a phosphoserine; by PKC (S27). Phosphoserine is present on residues S34 and S37. T41 carries the phosphothreonine modification. Annexin repeat units lie at residues F42–K113, T114–K185, D197–K269, and S273–G344. An N6-acetyllysine modification is found at K58. Positions 59, 60, 62, 97, 100, 105, 127, 129, 131, 132, and 134 each coordinate Ca(2+). Position 136 is a phosphothreonine (T136). Ca(2+) contacts are provided by D171, G210, and R213. A Glycyl lysine isopeptide (Lys-Gly) (interchain with G-Cter in SUMO1); alternate cross-link involves residue K214. K214 participates in a covalent cross-link: Glycyl lysine isopeptide (Lys-Gly) (interchain with G-Cter in SUMO2); alternate. Residue G215 participates in Ca(2+) binding. K239 carries the post-translational modification N6-acetyllysine. Residues D253, E255, and L256 each coordinate Ca(2+). K257 participates in a covalent cross-link: Glycyl lysine isopeptide (Lys-Gly) (interchain with G-Cter in SUMO1). Ca(2+) contacts are provided by E261, M286, G288, and G290. Residue K312 is modified to N6-acetyllysine. C324 and C343 are oxidised to a cystine. Ca(2+) is bound by residues L328, E330, and T331. Residue K332 forms a Glycyl lysine isopeptide (Lys-Gly) (interchain with G-Cter in SUMO1) linkage. Residue E336 participates in Ca(2+) binding.

This sequence belongs to the annexin family. As to quaternary structure, homodimer; non-covalently linked. Homodimer; linked by transglutamylation. Homodimers linked by transglutamylation are observed in placenta, but not in other tissues. Interacts with S100A11. Heterotetramer, formed by two molecules each of S100A11 and ANXA1. Interacts with DYSF. Interacts with EGFR. In terms of processing, phosphorylated by protein kinase C, EGFR and TRPM7. Phosphorylated in response to EGF treatment. Post-translationally, sumoylated. Proteolytically cleaved by cathepsin CTSG to release the active N-terminal peptide Ac2-26. In terms of tissue distribution, detected in resting neutrophils. Detected in peripheral blood T-cells. Detected in extracellular vesicles in blood serum from patients with inflammatory bowel disease, but not in serum from healthy donors. Detected in placenta (at protein level). Detected in liver.

The protein resides in the nucleus. The protein localises to the cytoplasm. It localises to the cell projection. Its subcellular location is the cilium. It is found in the cell membrane. The protein resides in the membrane. The protein localises to the endosome membrane. It localises to the basolateral cell membrane. Its subcellular location is the apical cell membrane. It is found in the lateral cell membrane. The protein resides in the secreted. The protein localises to the extracellular space. It localises to the extracellular exosome. Its subcellular location is the cytoplasmic vesicle. It is found in the secretory vesicle lumen. The protein resides in the phagocytic cup. The protein localises to the early endosome. It localises to the cytoplasmic vesicle membrane. Functionally, plays important roles in the innate immune response as effector of glucocorticoid-mediated responses and regulator of the inflammatory process. Has anti-inflammatory activity. Plays a role in glucocorticoid-mediated down-regulation of the early phase of the inflammatory response. Contributes to the adaptive immune response by enhancing signaling cascades that are triggered by T-cell activation, regulates differentiation and proliferation of activated T-cells. Promotes the differentiation of T-cells into Th1 cells and negatively regulates differentiation into Th2 cells. Has no effect on unstimulated T cells. Negatively regulates hormone exocytosis via activation of the formyl peptide receptors and reorganization of the actin cytoskeleton. Has high affinity for Ca(2+) and can bind up to eight Ca(2+) ions. Displays Ca(2+)-dependent binding to phospholipid membranes. Plays a role in the formation of phagocytic cups and phagosomes. Plays a role in phagocytosis by mediating the Ca(2+)-dependent interaction between phagosomes and the actin cytoskeleton. Functions at least in part by activating the formyl peptide receptors and downstream signaling cascades. Promotes chemotaxis of granulocytes and monocytes via activation of the formyl peptide receptors. Promotes rearrangement of the actin cytoskeleton, cell polarization and cell migration. Promotes resolution of inflammation and wound healing. Acts via neutrophil N-formyl peptide receptors to enhance the release of CXCL2. This Homo sapiens (Human) protein is Annexin A1 (ANXA1).